A 112-amino-acid polypeptide reads, in one-letter code: Putative pterin-4-alpha-carbinolamine dehydratase (112 aa).

It belongs to the pterin-4-alpha-carbinolamine dehydratase family.

It catalyses the reaction (4aS,6R)-4a-hydroxy-L-erythro-5,6,7,8-tetrahydrobiopterin = (6R)-L-erythro-6,7-dihydrobiopterin + H2O. The sequence is that of Putative pterin-4-alpha-carbinolamine dehydratase from Shewanella sp. (strain ANA-3).